Consider the following 23-residue polypeptide: Potassium channel toxin kappa-KTx 1.3 (23 aa).

2 disulfides stabilise this stretch: C4-C22 and C8-C18.

It belongs to the short scorpion toxin superfamily. Potassium channel inhibitor kappa-KTx family. Kappa-KTx 1 subfamily. In terms of assembly, monomer. In terms of processing, is not amidated. As to expression, expressed by the venom gland.

The protein resides in the secreted. Its function is as follows. Shows very weak blocking activity on voltage-gated potassium channels Kv10.1/KCNH1/EAG1 (6.2% inhibition by 40 uM of the toxin). Has no effect on the other voltage-gated potassium channels tested. This is Potassium channel toxin kappa-KTx 1.3 from Heterometrus spinifer (Asia giant forest scorpion).